A 380-amino-acid polypeptide reads, in one-letter code: Protein RecA (380 aa).

Residue 65–72 (GPESSGKT) participates in ATP binding. Positions 329–380 (DATGEETSETDDQAKEAKDKGTAKNGSKGQSKSTKATPAETALDLGDQPTEK) are disordered. The span at 340-350 (DQAKEAKDKGT) shows a compositional bias: basic and acidic residues. Residues 352 to 364 (KNGSKGQSKSTKA) show a composition bias toward polar residues.

It belongs to the RecA family.

It localises to the cytoplasm. In terms of biological role, can catalyze the hydrolysis of ATP in the presence of single-stranded DNA, the ATP-dependent uptake of single-stranded DNA by duplex DNA, and the ATP-dependent hybridization of homologous single-stranded DNAs. It interacts with LexA causing its activation and leading to its autocatalytic cleavage. The chain is Protein RecA from Lactiplantibacillus plantarum (strain ATCC BAA-793 / NCIMB 8826 / WCFS1) (Lactobacillus plantarum).